The primary structure comprises 1377 residues: Zinc finger MYM-type protein 2 (1377 aa).

Glycyl lysine isopeptide (Lys-Gly) (interchain with G-Cter in SUMO2) cross-links involve residues lysine 48, lysine 88, lysine 98, and lysine 104. Composition is skewed to polar residues over residues 85–115 (TSSK…SVSE) and 127–138 (TNQGQEKNSSNF). Positions 85–177 (TSSKNEELQG…GMGNSGITTE (93 aa)) are disordered. Positions 139 to 152 (IERRPPETKNRTND) are enriched in basic and acidic residues. A Glycyl lysine isopeptide (Lys-Gly) (interchain with G-Cter in SUMO2) cross-link involves residue lysine 147. Positions 153 to 164 (VDFSTSSFSRSK) are enriched in polar residues. Phosphoserine is present on serine 159. Glycyl lysine isopeptide (Lys-Gly) (interchain with G-Cter in SUMO2) cross-links involve residues lysine 253 and lysine 297. Positions 273–305 (NGESATHHNPDSWISQSASFPRNQKQPGVDSLS) are disordered. The segment covering 284 to 298 (SWISQSASFPRNQKQ) has biased composition (polar residues). Serine 305 bears the Phosphoserine mark. Glycyl lysine isopeptide (Lys-Gly) (interchain with G-Cter in SUMO2) cross-links involve residues lysine 312, lysine 325, lysine 348, and lysine 366. An MYM-type 1 zinc finger spans residues 327–363 (VKVTCANCKKPLQKGQTAYQRKGSAHLFCSTTCLSSF). An MYM-type 2 zinc finger spans residues 369–409 (PKKLCVMCKKDITTMKGTIVAQVDSSESFQEFCSTSCLSLY). Glycyl lysine isopeptide (Lys-Gly) (interchain with G-Cter in SUMO2) cross-links involve residues lysine 417, lysine 441, lysine 491, lysine 503, lysine 513, lysine 529, and lysine 532. MYM-type zinc fingers lie at residues 421-456 (NKSR…FNRY) and 463-502 (IMNC…VSEY). Residues 533-570 (LTTCTGCRTQCRFFDMTQCIGPNGYMEPYCSTACMNSH) form an MYM-type 5 zinc finger. Glycyl lysine isopeptide (Lys-Gly) (interchain with G-Cter in SUMO2) cross-links involve residues lysine 576, lysine 603, lysine 649, lysine 658, lysine 688, lysine 700, and lysine 709. The MYM-type 6 zinc finger occupies 636–671 (QLKCNYCKNSFCSKPEILEWENKVHQFCSKTCSDDY). 2 consecutive MYM-type zinc fingers follow at residues 723–758 (RCVT…CKKF) and 764–799 (KAAR…LLRF). Glycyl lysine isopeptide (Lys-Gly) (interchain with G-Cter in SUMO2) cross-links involve residues lysine 764, lysine 788, lysine 812, and lysine 829. 2 positions are modified to phosphoserine: serine 838 and serine 958. Disordered stretches follow at residues 983–1002 (LLKN…PYEP) and 1028–1064 (VFGE…SDNS). Positions 1039-1050 (PRSKKKGAKRKA) are enriched in basic residues. Serine 1064 carries the post-translational modification Phosphoserine. Phosphothreonine is present on threonine 1376.

In terms of assembly, may be a component of a BHC histone deacetylase complex that contains HDAC1, HDAC2, HMG20B/BRAF35, KDM1A, RCOR1/CoREST, PHF21A/BHC80, ZNF198, ZNF217, ZMYM3, GSE1 and GTF2I.

The protein localises to the nucleus. May function as a transcription factor. The protein is Zinc finger MYM-type protein 2 (ZMYM2) of Pongo abelii (Sumatran orangutan).